The chain runs to 29 residues: Cycloviolacin-O22 (29 aa).

A cross-link (cyclopeptide (Gly-Asn)) is located at residues 1 to 29 (GLPICGETCVGGTCNTPGCTCSWPVCTRN). 3 disulfides stabilise this stretch: cysteine 5–cysteine 19, cysteine 9–cysteine 21, and cysteine 14–cysteine 26.

Post-translationally, this is a cyclic peptide. As to expression, expressed in roots and runners but not in leaves, petals and petioles (at protein level).

Its function is as follows. Probably participates in a plant defense mechanism. In Viola odorata (Sweet violet), this protein is Cycloviolacin-O22.